The primary structure comprises 328 residues: 4-hydroxy-3-methylbut-2-enyl diphosphate reductase (328 aa).

A [4Fe-4S] cluster-binding site is contributed by Cys-24. (2E)-4-hydroxy-3-methylbut-2-enyl diphosphate contacts are provided by His-55 and His-88. 2 residues coordinate dimethylallyl diphosphate: His-55 and His-88. Residues His-55 and His-88 each coordinate isopentenyl diphosphate. Residue Cys-110 coordinates [4Fe-4S] cluster. His-138 is a binding site for (2E)-4-hydroxy-3-methylbut-2-enyl diphosphate. His-138 contacts dimethylallyl diphosphate. An isopentenyl diphosphate-binding site is contributed by His-138. The active-site Proton donor is Glu-140. Thr-178 provides a ligand contact to (2E)-4-hydroxy-3-methylbut-2-enyl diphosphate. Cys-208 contacts [4Fe-4S] cluster. 4 residues coordinate (2E)-4-hydroxy-3-methylbut-2-enyl diphosphate: Ser-236, Ser-237, Asn-238, and Ser-279. 4 residues coordinate dimethylallyl diphosphate: Ser-236, Ser-237, Asn-238, and Ser-279. Isopentenyl diphosphate-binding residues include Ser-236, Ser-237, Asn-238, and Ser-279.

The protein belongs to the IspH family. [4Fe-4S] cluster serves as cofactor.

It catalyses the reaction isopentenyl diphosphate + 2 oxidized [2Fe-2S]-[ferredoxin] + H2O = (2E)-4-hydroxy-3-methylbut-2-enyl diphosphate + 2 reduced [2Fe-2S]-[ferredoxin] + 2 H(+). It carries out the reaction dimethylallyl diphosphate + 2 oxidized [2Fe-2S]-[ferredoxin] + H2O = (2E)-4-hydroxy-3-methylbut-2-enyl diphosphate + 2 reduced [2Fe-2S]-[ferredoxin] + 2 H(+). Its pathway is isoprenoid biosynthesis; dimethylallyl diphosphate biosynthesis; dimethylallyl diphosphate from (2E)-4-hydroxy-3-methylbutenyl diphosphate: step 1/1. It functions in the pathway isoprenoid biosynthesis; isopentenyl diphosphate biosynthesis via DXP pathway; isopentenyl diphosphate from 1-deoxy-D-xylulose 5-phosphate: step 6/6. Catalyzes the conversion of 1-hydroxy-2-methyl-2-(E)-butenyl 4-diphosphate (HMBPP) into a mixture of isopentenyl diphosphate (IPP) and dimethylallyl diphosphate (DMAPP). Acts in the terminal step of the DOXP/MEP pathway for isoprenoid precursor biosynthesis. The polypeptide is 4-hydroxy-3-methylbut-2-enyl diphosphate reductase (Ehrlichia ruminantium (strain Gardel)).